We begin with the raw amino-acid sequence, 95 residues long: uncharacterized protein (95 aa).

This sequence belongs to the asfivirus DP96R family.

This is an uncharacterized protein from African swine fever virus (isolate Warthog/Namibia/Wart80/1980) (ASFV).